A 361-amino-acid chain; its full sequence is Histidinol-phosphate aminotransferase (361 aa).

Residue lysine 216 is modified to N6-(pyridoxal phosphate)lysine.

It belongs to the class-II pyridoxal-phosphate-dependent aminotransferase family. Histidinol-phosphate aminotransferase subfamily. As to quaternary structure, homodimer. The cofactor is pyridoxal 5'-phosphate.

The catalysed reaction is L-histidinol phosphate + 2-oxoglutarate = 3-(imidazol-4-yl)-2-oxopropyl phosphate + L-glutamate. It functions in the pathway amino-acid biosynthesis; L-histidine biosynthesis; L-histidine from 5-phospho-alpha-D-ribose 1-diphosphate: step 7/9. The sequence is that of Histidinol-phosphate aminotransferase from Francisella philomiragia subsp. philomiragia (strain ATCC 25017 / CCUG 19701 / FSC 153 / O#319-036).